We begin with the raw amino-acid sequence, 236 residues long: Proteasome subunit alpha (236 aa).

This sequence belongs to the peptidase T1A family. In terms of assembly, the 20S proteasome core is composed of 14 alpha and 14 beta subunits that assemble into four stacked heptameric rings, resulting in a barrel-shaped structure. The two inner rings, each composed of seven catalytic beta subunits, are sandwiched by two outer rings, each composed of seven alpha subunits. The catalytic chamber with the active sites is on the inside of the barrel. Has a gated structure, the ends of the cylinder being occluded by the N-termini of the alpha-subunits. Is capped by the proteasome-associated ATPase, ARC.

It is found in the cytoplasm. Its pathway is protein degradation; proteasomal Pup-dependent pathway. Its activity is regulated as follows. The formation of the proteasomal ATPase ARC-20S proteasome complex, likely via the docking of the C-termini of ARC into the intersubunit pockets in the alpha-rings, may trigger opening of the gate for substrate entry. Interconversion between the open-gate and close-gate conformations leads to a dynamic regulation of the 20S proteasome proteolysis activity. Functionally, component of the proteasome core, a large protease complex with broad specificity involved in protein degradation. This chain is Proteasome subunit alpha, found in Pseudarthrobacter chlorophenolicus (strain ATCC 700700 / DSM 12829 / CIP 107037 / JCM 12360 / KCTC 9906 / NCIMB 13794 / A6) (Arthrobacter chlorophenolicus).